The following is a 56-amino-acid chain: Large ribosomal subunit protein bL33 (56 aa).

Residues 1–12 are compositionally biased toward basic and acidic residues; the sequence is MATKGGRDKIKL. A disordered region spans residues 1-24; that stretch reads MATKGGRDKIKLESTAGTGHFYTT. Over residues 15-24 the composition is skewed to polar residues; that stretch reads TAGTGHFYTT.

It belongs to the bacterial ribosomal protein bL33 family.

The sequence is that of Large ribosomal subunit protein bL33 from Paracidovorax citrulli (strain AAC00-1) (Acidovorax citrulli).